Reading from the N-terminus, the 987-residue chain is 110 kDa U5 small nuclear ribonucleoprotein component CLO (987 aa).

Positions 1–54 (MESSLYDEFGNYVGPEIESDRDSDDEVEDEDLQDKHLEENGSDGEQGPGGSNGW) are disordered. A compositionally biased stretch (acidic residues) spans 17–32 (IESDRDSDDEVEDEDL). In terms of domain architecture, tr-type G spans 136-422 (ALVRNVALVG…LGVTLSNSAY (287 aa)). Residues 145-152 (GHLQHGKT) form a G1 region. 145 to 152 (GHLQHGKT) serves as a coordination point for GTP. The segment at 189–193 (NISIK) is G2. The G3 stretch occupies residues 215–218 (DTPG). GTP contacts are provided by residues 215-219 (DTPGH) and 269-272 (NKVD). The interval 269–272 (NKVD) is G4. The interval 395 to 397 (YSQ) is G5.

This sequence belongs to the TRAFAC class translation factor GTPase superfamily. Classic translation factor GTPase family. In terms of assembly, interacts with BRR2A and PRP8A. In terms of tissue distribution, expressed in flower buds, open flowers and siliques. Expressed at low levels in rosettes leaves, cauline leaves and stems.

The protein resides in the nucleus speckle. Splicing factor involved in pre-mRNA splicing and component of the spliceosome. Essential for reproduction. In female gametophyte, is necessary for the egg cell and central cell fate determination and hence reproductive success. Involved in a mechanism that prevents accessory cells from adopting gametic cell fate. Is necessary to restrict LIS expression to interfere with egg-cell specification. Probable component of U5 small nuclear ribonucleoprotein (snRNP) that is required for pre-mRNA splicing. Plays an essential role in female gametogenesis and embryo development. Required for the control of polarized cell growth and cell proliferation during floral organ morphogenesis. This is 110 kDa U5 small nuclear ribonucleoprotein component CLO from Arabidopsis thaliana (Mouse-ear cress).